The chain runs to 283 residues: Polyamine aminopropyltransferase (283 aa).

The 236-residue stretch at 2–237 (ELWYTEEHTD…GHWLFGFASK (236 aa)) folds into the PABS domain. Residue Gln-31 coordinates S-methyl-5'-thioadenosine. The spermidine site is built by His-62 and Asp-86. Residues Glu-106 and 137–138 (DG) contribute to the S-methyl-5'-thioadenosine site. Residue Asp-155 is the Proton acceptor of the active site. 155-158 (DSTD) serves as a coordination point for spermidine. Residue Pro-162 participates in S-methyl-5'-thioadenosine binding.

This sequence belongs to the spermidine/spermine synthase family. In terms of assembly, homodimer or homotetramer.

It localises to the cytoplasm. The enzyme catalyses S-adenosyl 3-(methylsulfanyl)propylamine + putrescine = S-methyl-5'-thioadenosine + spermidine + H(+). Its pathway is amine and polyamine biosynthesis; spermidine biosynthesis; spermidine from putrescine: step 1/1. Its function is as follows. Catalyzes the irreversible transfer of a propylamine group from the amino donor S-adenosylmethioninamine (decarboxy-AdoMet) to putrescine (1,4-diaminobutane) to yield spermidine. The protein is Polyamine aminopropyltransferase of Clostridium perfringens (strain 13 / Type A).